The primary structure comprises 23 residues: Augerpeptide hhe7a (23 aa).

3 disulfides stabilise this stretch: cysteine 3-cysteine 11, cysteine 6-cysteine 19, and cysteine 10-cysteine 22.

Expressed by the venom duct.

The protein localises to the secreted. Functionally, causes abnormal twist followed by immobility when injected into C.elegans. The sequence is that of Augerpeptide hhe7a from Hastula hectica (Sea snail).